The following is a 60-amino-acid chain: Large ribosomal subunit protein bL33 (60 aa).

This sequence belongs to the bacterial ribosomal protein bL33 family.

The chain is Large ribosomal subunit protein bL33 from Pelodictyon phaeoclathratiforme (strain DSM 5477 / BU-1).